The primary structure comprises 148 residues: UPF0756 membrane protein Ent638_1667 (148 aa).

Transmembrane regions (helical) follow at residues 14–34, 51–71, 86–106, and 121–141; these read ALGFISHNTTVAISILVLIIV, LTIGIIILTIGVMAPIASGTL, LIAIAVGVFVSWLGGRGVTLM, and VLGVALFRGVPVGPLIAAGLV.

This sequence belongs to the UPF0756 family.

It localises to the cell membrane. The chain is UPF0756 membrane protein Ent638_1667 from Enterobacter sp. (strain 638).